Here is a 609-residue protein sequence, read N- to C-terminus: Replication protein E1 (609 aa).

The short motif at 70-72 is the Nuclear localization signal element; that stretch reads KRK. Ser76 is subject to Phosphoserine; by host. The interval 84–103 is disordered; that stretch reads ITSHSNRTPSRAAPKRRKLD. The tract at residues 146-313 is DNA-binding region; sequence AANKENDLCG…TSLSHQRQDD (168 aa). The SF3 helicase domain maps to 398-562; it reads GDWKDIINFL…FPLNEAGQPA (165 aa). 438–445 is a binding site for ATP; that stretch reads GPPNTGKS.

This sequence belongs to the papillomaviridae E1 protein family. Can form hexamers. Interacts with E2 protein; this interaction increases E1 DNA binding specificity. Interacts with host DNA polymerase subunit POLA2. Interacts with host single stranded DNA-binding protein RPA1. Interacts with host TOP1; this interaction stimulates the enzymatic activity of TOP1. Phosphorylated.

It localises to the host nucleus. It carries out the reaction Couples ATP hydrolysis with the unwinding of duplex DNA by translocating in the 3'-5' direction.. The enzyme catalyses ATP + H2O = ADP + phosphate + H(+). ATP-dependent DNA 3'-5' helicase required for initiation of viral DNA replication. It forms a complex with the viral E2 protein. The E1-E2 complex binds to the replication origin which contains binding sites for both proteins. During the initial step, a dimer of E1 interacts with a dimer of protein E2 leading to a complex that binds the viral origin of replication with high specificity. Then, a second dimer of E1 displaces the E2 dimer in an ATP-dependent manner to form the E1 tetramer. Following this, two E1 monomers are added to each half of the site, which results in the formation of two E1 trimers on the viral ori. Subsequently, two hexamers will be created. The double hexamer acts as a bi-directional helicase machinery and unwinds the viral DNA and then recruits the host DNA polymerase to start replication. The protein is Replication protein E1 of Bos taurus (Bovine).